The primary structure comprises 229 residues: Triosephosphate isomerase (229 aa).

9-11 (NLK) lines the substrate pocket. Residue histidine 93 is the Electrophile of the active site. The active-site Proton acceptor is the glutamate 141. Substrate contacts are provided by residues isoleucine 146, glycine 181, and 202–203 (AS).

Belongs to the triosephosphate isomerase family. Homotetramer; dimer of dimers.

It is found in the cytoplasm. It catalyses the reaction D-glyceraldehyde 3-phosphate = dihydroxyacetone phosphate. It participates in carbohydrate biosynthesis; gluconeogenesis. Its pathway is carbohydrate degradation; glycolysis; D-glyceraldehyde 3-phosphate from glycerone phosphate: step 1/1. Its function is as follows. Involved in the gluconeogenesis. Catalyzes stereospecifically the conversion of dihydroxyacetone phosphate (DHAP) to D-glyceraldehyde-3-phosphate (G3P). The chain is Triosephosphate isomerase from Pyrobaculum islandicum (strain DSM 4184 / JCM 9189 / GEO3).